Here is a 227-residue protein sequence, read N- to C-terminus: Cytochrome c oxidase subunit 2 (227 aa).

Residues 1-14 (MAHPAQLGLQDATS) lie on the Mitochondrial intermembrane side of the membrane. The helical transmembrane segment at 15-45 (PVMEELITFHDHALMAMSLISLLVLYALFST) threads the bilayer. Residues 46-59 (LTTKMTNTNITDAQ) are Mitochondrial matrix-facing. A helical transmembrane segment spans residues 60-87 (EMETIWTILPAIILVLIAFPSLRILYMT). Topologically, residues 88-227 (DEVNNPSFTI…IFEMGPVFTL (140 aa)) are mitochondrial intermembrane. Cu cation-binding residues include His-161, Cys-196, Glu-198, Cys-200, His-204, and Met-207. Mg(2+) is bound at residue Glu-198.

The protein belongs to the cytochrome c oxidase subunit 2 family. In terms of assembly, component of the cytochrome c oxidase (complex IV, CIV), a multisubunit enzyme composed of 14 subunits. The complex is composed of a catalytic core of 3 subunits MT-CO1, MT-CO2 and MT-CO3, encoded in the mitochondrial DNA, and 11 supernumerary subunits COX4I, COX5A, COX5B, COX6A, COX6B, COX6C, COX7A, COX7B, COX7C, COX8 and NDUFA4, which are encoded in the nuclear genome. The complex exists as a monomer or a dimer and forms supercomplexes (SCs) in the inner mitochondrial membrane with NADH-ubiquinone oxidoreductase (complex I, CI) and ubiquinol-cytochrome c oxidoreductase (cytochrome b-c1 complex, complex III, CIII), resulting in different assemblies (supercomplex SCI(1)III(2)IV(1) and megacomplex MCI(2)III(2)IV(2)). Found in a complex with TMEM177, COA6, COX18, COX20, SCO1 and SCO2. Interacts with TMEM177 in a COX20-dependent manner. Interacts with COX20. Interacts with COX16. Cu cation serves as cofactor.

Its subcellular location is the mitochondrion inner membrane. The enzyme catalyses 4 Fe(II)-[cytochrome c] + O2 + 8 H(+)(in) = 4 Fe(III)-[cytochrome c] + 2 H2O + 4 H(+)(out). Component of the cytochrome c oxidase, the last enzyme in the mitochondrial electron transport chain which drives oxidative phosphorylation. The respiratory chain contains 3 multisubunit complexes succinate dehydrogenase (complex II, CII), ubiquinol-cytochrome c oxidoreductase (cytochrome b-c1 complex, complex III, CIII) and cytochrome c oxidase (complex IV, CIV), that cooperate to transfer electrons derived from NADH and succinate to molecular oxygen, creating an electrochemical gradient over the inner membrane that drives transmembrane transport and the ATP synthase. Cytochrome c oxidase is the component of the respiratory chain that catalyzes the reduction of oxygen to water. Electrons originating from reduced cytochrome c in the intermembrane space (IMS) are transferred via the dinuclear copper A center (CU(A)) of subunit 2 and heme A of subunit 1 to the active site in subunit 1, a binuclear center (BNC) formed by heme A3 and copper B (CU(B)). The BNC reduces molecular oxygen to 2 water molecules using 4 electrons from cytochrome c in the IMS and 4 protons from the mitochondrial matrix. The polypeptide is Cytochrome c oxidase subunit 2 (MT-CO2) (Mandrillus leucophaeus (Drill)).